Here is a 480-residue protein sequence, read N- to C-terminus: Probable E3 ubiquitin protein ligase DRIPH (480 aa).

The segment at 16–57 adopts an RING-type zinc-finger fold; it reads CPICTNPFKDATTISECLHTFCRSCIRNKFINERVNACPVCN. 4 disordered regions span residues 93–133, 167–193, 241–261, and 280–356; these read GPKT…EPAN, RGRK…PKIK, TPPD…ESVE, and VNQN…EMKV. Over residues 103–112 the composition is skewed to basic residues; sequence SSKKKRKSRT. The span at 113–133 shows a compositional bias: low complexity; the sequence is SLRVSSSRVSSSPDTPLEPAN. Positions 175 to 193 are enriched in basic and acidic residues; it reads KKIDSKPEPELPPKEPKIK. A compositionally biased stretch (acidic residues) spans 246–260; sequence VEPEISSDDDTEESV. The segment covering 298–309 has biased composition (polar residues); that stretch reads GQKLKTNGAATS.

The catalysed reaction is S-ubiquitinyl-[E2 ubiquitin-conjugating enzyme]-L-cysteine + [acceptor protein]-L-lysine = [E2 ubiquitin-conjugating enzyme]-L-cysteine + N(6)-ubiquitinyl-[acceptor protein]-L-lysine.. It functions in the pathway protein modification; protein ubiquitination. This is Probable E3 ubiquitin protein ligase DRIPH from Arabidopsis thaliana (Mouse-ear cress).